We begin with the raw amino-acid sequence, 179 residues long: Large ribosomal subunit protein uL6 (179 aa).

The protein belongs to the universal ribosomal protein uL6 family. In terms of assembly, part of the 50S ribosomal subunit.

Functionally, this protein binds to the 23S rRNA, and is important in its secondary structure. It is located near the subunit interface in the base of the L7/L12 stalk, and near the tRNA binding site of the peptidyltransferase center. The polypeptide is Large ribosomal subunit protein uL6 (Crocosphaera subtropica (strain ATCC 51142 / BH68) (Cyanothece sp. (strain ATCC 51142))).